The following is a 312-amino-acid chain: Pseudouridine-5'-phosphate glycosidase (312 aa).

The Proton donor role is filled by Glu31. Lys93 and Val113 together coordinate substrate. Asp145 lines the Mn(2+) pocket. 147–149 (SAD) provides a ligand contact to substrate. Lys166 functions as the Nucleophile in the catalytic mechanism.

The protein belongs to the pseudouridine-5'-phosphate glycosidase family. In terms of assembly, homotrimer. The cofactor is Mn(2+). Requires Fe(2+) as cofactor. Co(2+) serves as cofactor.

The enzyme catalyses D-ribose 5-phosphate + uracil = psi-UMP + H2O. Inhibited by Zn(2+) and Ni(2+). Functionally, catalyzes the reversible cleavage of pseudouridine 5'-phosphate (PsiMP) to ribose 5-phosphate and uracil. Functions biologically in the cleavage direction, as part of a pseudouridine degradation pathway. The polypeptide is Pseudouridine-5'-phosphate glycosidase (Escherichia coli (strain K12)).